The following is a 1020-amino-acid chain: Tetrathionate reductase subunit A (1020 aa).

Positions 1–33 form a signal peptide, tat-type signal; that stretch reads MANLTRRQWLKVGLAVGGMVTFGLSYRDVAKRA. The 4Fe-4S Mo/W bis-MGD-type domain occupies 71 to 154; that stretch reads QTIAMTQCFG…TLLESLYSPL (84 aa). [4Fe-4S] cluster contacts are provided by Cys-78, Cys-81, Cys-85, and Cys-140.

It belongs to the prokaryotic molybdopterin-containing oxidoreductase family. As to quaternary structure, probably composed of three subunits: TtrA, TtrB and TtrC. The cofactor is [4Fe-4S] cluster. It depends on Mo-bis(molybdopterin guanine dinucleotide) as a cofactor. In terms of processing, predicted to be exported by the Tat system. The position of the signal peptide cleavage has not been experimentally proven.

It localises to the periplasm. The protein localises to the cell inner membrane. In terms of biological role, part of a membrane-bound tetrathionate reductase that catalyzes the reduction of tetrathionate to thiosulfate. TtrA is the catalytic subunit. During mice infection, the ability to use tetrathionate as an electron acceptor is a growth advantage for S.typhimurium over the competing microbiota in the lumen of the inflamed gut. This is Tetrathionate reductase subunit A (ttrA) from Salmonella typhimurium (strain LT2 / SGSC1412 / ATCC 700720).